Consider the following 644-residue polypeptide: 1-deoxy-D-xylulose-5-phosphate synthase (644 aa).

Residues His-78 and 120 to 122 each bind thiamine diphosphate; that span reads GHA. Asp-149 is a binding site for Mg(2+). Residues 150-151, Asn-178, and Glu-373 each bind thiamine diphosphate; that span reads AA. A Mg(2+)-binding site is contributed by Asn-178.

This sequence belongs to the transketolase family. DXPS subfamily. Homodimer. Mg(2+) is required as a cofactor. Requires thiamine diphosphate as cofactor.

The enzyme catalyses D-glyceraldehyde 3-phosphate + pyruvate + H(+) = 1-deoxy-D-xylulose 5-phosphate + CO2. It participates in metabolic intermediate biosynthesis; 1-deoxy-D-xylulose 5-phosphate biosynthesis; 1-deoxy-D-xylulose 5-phosphate from D-glyceraldehyde 3-phosphate and pyruvate: step 1/1. Functionally, catalyzes the acyloin condensation reaction between C atoms 2 and 3 of pyruvate and glyceraldehyde 3-phosphate to yield 1-deoxy-D-xylulose-5-phosphate (DXP). The chain is 1-deoxy-D-xylulose-5-phosphate synthase from Chlamydia abortus (strain DSM 27085 / S26/3) (Chlamydophila abortus).